We begin with the raw amino-acid sequence, 108 residues long: Small ribosomal subunit protein uS10 (108 aa).

The protein belongs to the universal ribosomal protein uS10 family. Part of the 30S ribosomal subunit.

In terms of biological role, involved in the binding of tRNA to the ribosomes. The sequence is that of Small ribosomal subunit protein uS10 from Ehrlichia canis (strain Jake).